Consider the following 844-residue polypeptide: Prickle-like protein 2 (844 aa).

Positions 18–126 constitute a PET domain; the sequence is FDFQRNSTSD…NVRPFPVTMT (109 aa). Ser92 is subject to Phosphoserine. LIM zinc-binding domains follow at residues 128 to 193, 193 to 253, and 253 to 317; these read AICE…CLKP, PRCA…LYAE, and EYCD…EDPN. 2 disordered regions span residues 314-350 and 481-519; these read EDPNGSDSSDSAFQNARAKESRRSAKIGKNKGKTEEP and ESYSDMSSQSFSETRGSIQVPKYEEEEEEEGGLSTQQCR. The span at 318–327 shows a compositional bias: polar residues; sequence GSDSSDSAFQ. 3 positions are modified to phosphoserine: Ser319, Ser321, and Ser322. Over residues 481–493 the composition is skewed to low complexity; sequence ESYSDMSSQSFSE. Phosphothreonine occurs at positions 534, 536, and 539. 4 positions are modified to phosphoserine: Ser543, Ser546, Ser607, and Ser642. The disordered stretch occupies residues 639 to 709; it reads MHQSFDFDGG…HLASEREAIS (71 aa). Residues 682–692 show a composition bias toward basic residues; it reads FRPHRSRRSRR. The span at 693–709 shows a compositional bias: basic and acidic residues; it reads SRSDNALHLASEREAIS. Position 731 is a phosphoserine (Ser731). The tract at residues 822-844 is disordered; it reads STLGGRGQLHSRKRQKSKNCIIS. Cysteine methyl ester is present on Cys841. Cys841 is lipidated: S-farnesyl cysteine. The propeptide at 842 to 844 is removed in mature form; that stretch reads IIS.

It belongs to the prickle / espinas / testin family. In terms of tissue distribution, expressed in brain, eye and testis. Additionally in fetal brain, adult cartilage, pancreatic islet, gastric cancer and uterus tumors.

It localises to the nucleus membrane. The chain is Prickle-like protein 2 (PRICKLE2) from Homo sapiens (Human).